We begin with the raw amino-acid sequence, 130 residues long: Small ribosomal subunit protein uS9 (130 aa).

This sequence belongs to the universal ribosomal protein uS9 family.

This Exiguobacterium sibiricum (strain DSM 17290 / CCUG 55495 / CIP 109462 / JCM 13490 / 255-15) protein is Small ribosomal subunit protein uS9.